The following is a 189-amino-acid chain: Rho-related protein racM (189 aa).

12–19 (GDYGVGKT) provides a ligand contact to GTP. Residues 35 to 43 (YVPTALDNF) carry the Effector region motif. GTP is bound by residues 60–64 (DTAGG) and 118–121 (TKID). Cys-186 is subject to Cysteine methyl ester. Cys-186 is lipidated: S-geranylgeranyl cysteine. Residues 187–189 (IIL) constitute a propeptide, removed in mature form.

This sequence belongs to the small GTPase superfamily. Rho family.

The protein localises to the cell membrane. The sequence is that of Rho-related protein racM (racM) from Dictyostelium discoideum (Social amoeba).